The chain runs to 348 residues: Ketol-acid reductoisomerase (NADP(+)) (348 aa).

The KARI N-terminal Rossmann domain maps to 2-182; sequence AKTYYDHDAD…GCTRAGVLET (181 aa). NADP(+) contacts are provided by residues 25 to 28, serine 51, serine 53, and 83 to 86; these read YGSQ and DTAQ. Histidine 108 is a catalytic residue. Residue glycine 134 participates in NADP(+) binding. In terms of domain architecture, KARI C-terminal knotted spans 183 to 328; that stretch reads TFKEETETDL…EKLRAAMPFL (146 aa). Residues aspartate 191, glutamate 195, glutamate 227, and glutamate 231 each coordinate Mg(2+). Serine 252 contributes to the substrate binding site.

Belongs to the ketol-acid reductoisomerase family. Mg(2+) is required as a cofactor.

It carries out the reaction (2R)-2,3-dihydroxy-3-methylbutanoate + NADP(+) = (2S)-2-acetolactate + NADPH + H(+). It catalyses the reaction (2R,3R)-2,3-dihydroxy-3-methylpentanoate + NADP(+) = (S)-2-ethyl-2-hydroxy-3-oxobutanoate + NADPH + H(+). It participates in amino-acid biosynthesis; L-isoleucine biosynthesis; L-isoleucine from 2-oxobutanoate: step 2/4. It functions in the pathway amino-acid biosynthesis; L-valine biosynthesis; L-valine from pyruvate: step 2/4. Involved in the biosynthesis of branched-chain amino acids (BCAA). Catalyzes an alkyl-migration followed by a ketol-acid reduction of (S)-2-acetolactate (S2AL) to yield (R)-2,3-dihydroxy-isovalerate. In the isomerase reaction, S2AL is rearranged via a Mg-dependent methyl migration to produce 3-hydroxy-3-methyl-2-ketobutyrate (HMKB). In the reductase reaction, this 2-ketoacid undergoes a metal-dependent reduction by NADPH to yield (R)-2,3-dihydroxy-isovalerate. This chain is Ketol-acid reductoisomerase (NADP(+)), found in Acidobacterium capsulatum (strain ATCC 51196 / DSM 11244 / BCRC 80197 / JCM 7670 / NBRC 15755 / NCIMB 13165 / 161).